A 178-amino-acid polypeptide reads, in one-letter code: Protein-export protein SecB (178 aa).

The segment covering 1–13 (MADEGDVLTDLDM) has biased composition (acidic residues). The segment at 1–25 (MADEGDVLTDLDMDPAAGGNGADNR) is disordered.

Belongs to the SecB family. As to quaternary structure, homotetramer, a dimer of dimers. One homotetramer interacts with 1 SecA dimer.

Its subcellular location is the cytoplasm. Its function is as follows. One of the proteins required for the normal export of preproteins out of the cell cytoplasm. It is a molecular chaperone that binds to a subset of precursor proteins, maintaining them in a translocation-competent state. It also specifically binds to its receptor SecA. This chain is Protein-export protein SecB, found in Erythrobacter litoralis (strain HTCC2594).